The primary structure comprises 450 residues: Keratin, type I cytoskeletal 25 (450 aa).

The segment at Met1–Ser24 is disordered. Residues Met1 to Asn78 form a head region. Positions Glu79–Trp114 are coil 1A. The region spanning Glu79 to Cys394 is the IF rod domain. The linker 1 stretch occupies residues Tyr115–Ile136. A coil 1B region spans residues Ile137–Leu228. Residues Gln229–Leu251 are linker 12. The segment at Leu252 to Asp390 is coil 2. Residues Asp391–Asn450 are tail. Position 442 is a phosphoserine (Ser442).

The protein belongs to the intermediate filament family. As to quaternary structure, heterodimer of a type I and a type II keratin. Heterodimer with type II keratin KRT5 leading to the formation of keratin intermediate filament (KIF) network. Interacts with KRT6A to form filaments.

It is found in the cytoplasm. Essential for the proper assembly of type I and type II keratin protein complexes and formation of keratin intermediate filaments in the inner root sheath (irs). Plays a role in the cytoskeleton organization. The sequence is that of Keratin, type I cytoskeletal 25 from Capra hircus (Goat).